We begin with the raw amino-acid sequence, 71 residues long: UPF0352 protein Ssed_1809 (71 aa).

This sequence belongs to the UPF0352 family.

In Shewanella sediminis (strain HAW-EB3), this protein is UPF0352 protein Ssed_1809.